Here is a 173-residue protein sequence, read N- to C-terminus: Translation initiation factor IF-3 (173 aa).

It belongs to the IF-3 family. In terms of assembly, monomer.

It localises to the cytoplasm. Functionally, IF-3 binds to the 30S ribosomal subunit and shifts the equilibrium between 70S ribosomes and their 50S and 30S subunits in favor of the free subunits, thus enhancing the availability of 30S subunits on which protein synthesis initiation begins. This Clostridium tetani (strain Massachusetts / E88) protein is Translation initiation factor IF-3.